The chain runs to 914 residues: Transcription factor AZF1 (914 aa).

3 disordered regions span residues 1 to 63 (MPPP…ESIS), 93 to 124 (STGG…SQIG), and 138 to 275 (QQLQ…NSNQ). The span at 13–34 (QAGQNESQNQSSGEAGEQNQEH) shows a compositional bias: polar residues. Residues 44-56 (QSQPASSQPQHQQ) are compositionally biased toward low complexity. A Phosphoserine modification is found at S61. The span at 107 to 116 (PRLSTSSTHQ) shows a compositional bias: polar residues. Residues 136-158 (QQQQLQNQHRQQQQQQQQQSHQQ) form a polyglutamine domain region. The segment covering 138-158 (QQLQNQHRQQQQQQQQQSHQQ) has biased composition (low complexity). The span at 164–194 (PSFSTGLTGSSSQYQFLPRNDNTSQPPSKRN) shows a compositional bias: polar residues. 2 stretches are compositionally biased toward low complexity: residues 206–222 (FEFF…FQPS) and 245–275 (SNGT…NSNQ). S286 and S325 each carry phosphoserine. The interval 326 to 415 (LSVNNKANGD…STDTTSNSRK (90 aa)) is disordered. The span at 359–390 (DSSNNNNNNNNNNNNENNNDNNNDNNDNSINS) shows a compositional bias: low complexity. A polyasparagine domain region spans residues 362–386 (NNNNNNNNNNNNENNNDNNNDNNDN). Over residues 391-412 (ATSTNIPNQEDHSLASTDTTSN) the composition is skewed to polar residues. 4 consecutive C2H2-type zinc fingers follow at residues 593-615 (HECP…VRSH), 621-643 (FVCD…ERLH), 649-671 (YSCD…LVTH), and 677-702 (FVCK…NRFH). 2 disordered regions span residues 743–812 (GIKG…SPTQ) and 853–877 (RLGS…APGV). Residues 754–770 (KKSTISSPENHPASTIL) are compositionally biased toward polar residues. Composition is skewed to low complexity over residues 771–782 (NPNTNANNAIAN), 796–809 (SSSN…SMIS), and 856–868 (SSSS…NNSN).

The protein localises to the nucleus. It is found in the cytoplasm. It localises to the cytosol. Its function is as follows. Transcription factor involved in the diauxic shift. In the presence of glucose, activates carbon and energy metabolism genes, and in te presence of glycerol-lactate, activates genes needed for cell wall maintenance. Binds to DNA elements with the sequence AAAAGAAA (A4GA3), a motif enriched in the promoters of AZF1-sensitive genes. Required for glucose induction of CLN3 transcription. Also required for proper FLO11 expression. May also function as a corepressor. In terms of biological role, as an intrinsically disordered protein, AZF1 is capable of forming the prion [AZF1+] that confers resistance to the drug radicicol in a gain-of-function manner but decreases the expression of AZF1's target genes. The chain is Transcription factor AZF1 from Saccharomyces cerevisiae (strain ATCC 204508 / S288c) (Baker's yeast).